We begin with the raw amino-acid sequence, 407 residues long: Eukaryotic initiation factor 4A-II (407 aa).

The interval 1–23 is disordered; sequence MSGGSADYSRDHGGPEGMEPDGV. Residues 33 to 61 carry the Q motif motif; it reads DNFDDMNLKESLLRGIYAYGFEKPSAIQQ. Residues 64–235 form the Helicase ATP-binding domain; the sequence is IIPCIKGYDV…KKFMREPIRI (172 aa). An ATP-binding site is contributed by 77–84; sequence AQSGTGKT. Positions 183 to 186 match the DEAD box motif; sequence DEAD. Positions 246-407 constitute a Helicase C-terminal domain; the sequence is GIKQFYINVE…EMPMNVADLI (162 aa).

The protein belongs to the DEAD box helicase family. eIF4A subfamily. In terms of assembly, eIF4F is a multi-subunit complex, the composition of which varies with external and internal environmental conditions. It is composed of at least EIF4A, EIF4E and EIF4G1/EIFFG3. Interacts with EIF4E.

It catalyses the reaction ATP + H2O = ADP + phosphate + H(+). Functionally, ATP-dependent RNA helicase which is a subunit of the eIF4F complex involved in cap recognition and is required for mRNA binding to ribosome. In the current model of translation initiation, eIF4A unwinds RNA secondary structures in the 5'-UTR of mRNAs which is necessary to allow efficient binding of the small ribosomal subunit, and subsequent scanning for the initiator codon. The protein is Eukaryotic initiation factor 4A-II (EIF4A2) of Gallus gallus (Chicken).